We begin with the raw amino-acid sequence, 713 residues long: MEVVEGRRKTCLDVVDSPSSRQKQTIAVSLVDGKNYPTRFLNSRTIDKLKQELNTSNLSTGEMSTNETLKNAQEVAGKLLSEENEDSISEHFDEYLGADKPGISFLTRLKTLESWFQSLSLQDRLTTLRTLLHHLPSQEISTLLSSSLTSSPSNSGLSLDKSLPSSPKGDSPSLSSSLPSLTTKSNLSGNLNMVTPASTQGPAFSSKHGFSNALSTASPIPVRTSSVSSTYLTQDREASSKNCLSKALAFSSIEPPASSASTSPRNTPTPSNNGTSINANVTSSLTSNSTGKTSKTTDLLIAASKKSLPSNSTPSKPNTSFFETPHNNIWDSRDRGAFSAPPAPFFPLGFSPHLNDESSRSRWSNISYSPPPPPPPPELLNHSPKSRPLGDKPYLFYRNNQIGPRTRTEGRSSITEGKPFLSSSLRFEHVPSANDLNSVVNARVEKSTGQPSTPLNRQHYFNELPHSTTPVTLPSLIHGSEIDRRRSGFCLNNFNSTPPFQPYHYEIGSGLPQQMHATNTILTNPIDPNSNISTPVGMHLCTLPYTYQPFSSVEKIETPPNNSKNQTYRRSSRGSNKTRKSISHSKNTDKHVGNELPQDIPSWLRSLRLHKYTNNLKDTDWDALVSLSDLDLQNRGIMALGARRKLLKSFQEVAPLVSSKKMNENLKAAKNQSSESLTSFKGHTDSEDLPSGSMSNEISSNSTKQDVSSSSMD.

Low complexity predominate over residues N154–S188. 5 disordered regions span residues N154–H208, E254–G336, D356–L389, E554–L596, and K667–D713. 2 stretches are compositionally biased toward polar residues: residues G189–H208 and S258–V281. Low complexity-rich tracts occupy residues T282 to T297 and S304 to S320. A compositionally biased stretch (polar residues) spans F321–W330. Residues S369 to E378 show a composition bias toward pro residues. Residues P559–R569 show a composition bias toward polar residues. Basic residues predominate over residues R570 to S583. The SAM domain occupies E595 to L656. Residues K670–K681 are compositionally biased toward polar residues. S673 bears the Phosphoserine mark. Residues S691 to S702 are compositionally biased toward low complexity. Residues T703 to D713 show a composition bias toward polar residues.

It belongs to the VTS1 family. As to quaternary structure, monomer. Binds to RNA.

The protein resides in the cytoplasm. Its subcellular location is the cytosol. It localises to the P-body. Its function is as follows. RNA-binding protein involved in post-transcriptional regulation through transcript degradation. The chain is RNA-binding protein vts1 from Schizosaccharomyces pombe (strain 972 / ATCC 24843) (Fission yeast).